We begin with the raw amino-acid sequence, 394 residues long: RAB6A-GEF complex partner protein 2 (394 aa).

The protein belongs to the RGP1 family. Forms a complex with RIC1; the interaction enhances RAB6A GTPase activity. Interacts with RIC1. Interacts with RAB6A; the interaction is direct with a preference for RAB6A-GDP. Interacts with RAB33B.

The protein localises to the cytoplasm. The protein resides in the cytosol. Its subcellular location is the membrane. Functionally, the RIC1-RGP1 complex acts as a guanine nucleotide exchange factor (GEF), which activates RAB6A by exchanging bound GDP for free GTP and may thereby required for efficient fusion of endosome-derived vesicles with the Golgi compartment. The RIC1-RGP1 complex participates in the recycling of mannose-6-phosphate receptors. The sequence is that of RAB6A-GEF complex partner protein 2 from Bos taurus (Bovine).